The chain runs to 209 residues: Uracil phosphoribosyltransferase (209 aa).

5-phospho-alpha-D-ribose 1-diphosphate contacts are provided by residues arginine 79, arginine 104, and 131 to 139 (DPMLATGNS). Residues isoleucine 194 and 199–201 (GDA) contribute to the uracil site. Aspartate 200 serves as a coordination point for 5-phospho-alpha-D-ribose 1-diphosphate.

The protein belongs to the UPRTase family. Mg(2+) serves as cofactor.

The enzyme catalyses UMP + diphosphate = 5-phospho-alpha-D-ribose 1-diphosphate + uracil. The protein operates within pyrimidine metabolism; UMP biosynthesis via salvage pathway; UMP from uracil: step 1/1. Its activity is regulated as follows. Allosterically activated by GTP. Catalyzes the conversion of uracil and 5-phospho-alpha-D-ribose 1-diphosphate (PRPP) to UMP and diphosphate. The protein is Uracil phosphoribosyltransferase of Rhodococcus jostii (strain RHA1).